Reading from the N-terminus, the 163-residue chain is Phosphopantetheine adenylyltransferase (163 aa).

S10 is a binding site for substrate. ATP-binding positions include 10–11 and H18; that span reads SF. 3 residues coordinate substrate: K42, L74, and R88. ATP-binding positions include 89-91, E99, and 124-130; these read GLR and YSFLSSS.

It belongs to the bacterial CoaD family. As to quaternary structure, homohexamer. Requires Mg(2+) as cofactor.

The protein resides in the cytoplasm. It carries out the reaction (R)-4'-phosphopantetheine + ATP + H(+) = 3'-dephospho-CoA + diphosphate. Its pathway is cofactor biosynthesis; coenzyme A biosynthesis; CoA from (R)-pantothenate: step 4/5. Its function is as follows. Reversibly transfers an adenylyl group from ATP to 4'-phosphopantetheine, yielding dephospho-CoA (dPCoA) and pyrophosphate. This chain is Phosphopantetheine adenylyltransferase, found in Bacillus cereus (strain G9842).